The chain runs to 217 residues: Probable GTP-binding protein EngB (217 aa).

An EngB-type G domain is found at 24 to 207 (SQPEICFAGR…HELIESWLIP (184 aa)). GTP contacts are provided by residues 32–39 (GRSNAGKS), 59–63 (GRTQH), 81–84 (DLPG), 148–151 (TKCD), and 185–188 (LFSA). The Mg(2+) site is built by Ser-39 and Thr-61.

This sequence belongs to the TRAFAC class TrmE-Era-EngA-EngB-Septin-like GTPase superfamily. EngB GTPase family. It depends on Mg(2+) as a cofactor.

Its function is as follows. Necessary for normal cell division and for the maintenance of normal septation. The protein is Probable GTP-binding protein EngB of Paraburkholderia phytofirmans (strain DSM 17436 / LMG 22146 / PsJN) (Burkholderia phytofirmans).